A 508-amino-acid chain; its full sequence is Monocarboxylate transporter 9 (508 aa).

Topologically, residues 1–12 (MEFQKSPDGGWG) are cytoplasmic. The next 12 membrane-spanning stretches (helical) occupy residues 13–33 (WVIVVVSFFTQFLSYGSPLAV), 53–73 (WVGSLASGVGLLASPVCSLFV), 80–100 (PVTIFSGFLVAGGLMLSSLAP), 102–122 (IYFLFFSYGIVVGLGCGLLYT), 137–157 (GLALGLISTGSSVGLFIYAAL), 164–184 (FYGLDGCLLIVGALALNILAC), 303–323 (VFSALFIAILLFDIGGFPPSL), 341–361 (MPLISIFGIMTAVGKLLLGIL), 370–390 (LYLYVATLIITGLALCAIPFA), 396–416 (LAILSGILGFLTGNWSIFPYV), 431–451 (GILMFFAGLGNSLGPPIVGWF), and 460–480 (IAFYFSGFCVLLGGFILLLAI). Residues 481–508 (LPCWDMCNKKLPKPAVPTTFFYKVASNV) lie on the Cytoplasmic side of the membrane.

Belongs to the major facilitator superfamily. Monocarboxylate porter (TC 2.A.1.13) family.

It localises to the cell membrane. The catalysed reaction is creatine(in) = creatine(out). It carries out the reaction (R)-carnitine(in) = (R)-carnitine(out). Extracellular pH-and Na(+)-sensitive low-affinity creatine transporter. Also functions as a pH-independent carnitine efflux transporter. The sequence is that of Monocarboxylate transporter 9 (Slc16a9) from Mus musculus (Mouse).